A 461-amino-acid polypeptide reads, in one-letter code: Phosphatidate cytidylyltransferase 1 (461 aa).

Residues methionine 1 to threonine 68 form a disordered region. At arginine 7 the chain carries Omega-N-methylarginine. Residues arginine 22–serine 56 are compositionally biased toward basic and acidic residues. Phosphoserine occurs at positions 35 and 37. 6 consecutive transmembrane segments (helical) span residues methionine 96–leucine 116, phenylalanine 149–phenylalanine 169, histidine 183–valine 203, leucine 230–isoleucine 250, glycine 279–serine 299, and isoleucine 357–phenylalanine 377.

This sequence belongs to the CDS family. As to quaternary structure, homodimer. Interacts with FOS; this interaction may enhance catalytic activity. The cofactor is Mg(2+). As to expression, expressed in adult brain, eye, smooth muscle and testis. Highly expressed in the inner segment of the photoreceptor layer of adult retina.

The protein resides in the endoplasmic reticulum membrane. The enzyme catalyses a 1,2-diacyl-sn-glycero-3-phosphate + CTP + H(+) = a CDP-1,2-diacyl-sn-glycerol + diphosphate. It catalyses the reaction 1-octadecanoyl-2-(5Z,8Z,11Z,14Z-eicosatetraenoyl)-sn-glycero-3-phosphate + CTP + H(+) = 1-octadecanoyl-2-(5Z,8Z,11Z,14Z-eicosatetraenoyl)-sn-glycero-3-cytidine-5'-diphosphate + diphosphate. The catalysed reaction is 1-octadecanoyl-2-(9Z,12Z-octadecadienoyl)-sn-glycero-3-phosphate + CTP + H(+) = 1-octadecanoyl-2-(9Z,12Z-octadecadienoyl)-sn-glycero-3-cytidine-5'-diphosphate + diphosphate. It carries out the reaction 1-hexadecanoyl-2-(5Z,8Z,11Z,14Z-eicosatetraenoyl)-sn-glycero-3-phosphate + CTP + H(+) = 1-hexadecanoyl-2-(5Z,8Z,11Z,14Z-eicosatetraenoyl)-sn-glycero-3-cytidine-5'-diphosphate + diphosphate. The enzyme catalyses 1,2-di-(5Z,8Z,11Z,14Z)-eicosatetraenoyl-sn-glycero-3-phosphate + CTP + H(+) = 1,2-di-(5Z,8Z,11Z,14Z-eicosatetraenoyl)-sn-glycero-3-cytidine-5'-diphosphate + diphosphate. It catalyses the reaction 1-octadecanoyl-2-(9Z-octadecenoyl)-sn-glycero-3-phosphate + CTP + H(+) = 1-octadecanoyl-2-(9Z-octadecenoyl)-sn-glycero-3-cytidine-5'-diphosphate + diphosphate. The catalysed reaction is 1-octadecanoyl-2-(4Z,7Z,10Z,13Z,16Z,19Z-docosahexaenoyl)-sn-glycero-3-phosphate + CTP + H(+) = 1-octadecanoyl-2-(4Z,7Z,10Z,13Z,16Z,19Z-docosahexaenoyl)-sn-glycero-3-cytidine-5'-diphosphate + diphosphate. It carries out the reaction 1,2-di-(9Z,12Z-octadecadienoyl)-sn-glycero-3-phosphate + CTP + H(+) = 1,2-di-(9Z,12Z-octadecadienoyl)-sn-glycero-3-cytidine-5'-diphosphate + diphosphate. The enzyme catalyses 1,2-di-(9Z-octadecenoyl)-sn-glycero-3-phosphate + CTP + H(+) = 1,2-di-(9Z-octadecenoyl)-sn-glycero-3-cytidine-5'-diphosphate + diphosphate. It functions in the pathway phospholipid metabolism; CDP-diacylglycerol biosynthesis; CDP-diacylglycerol from sn-glycerol 3-phosphate: step 3/3. Its function is as follows. Catalyzes the conversion of phosphatidic acid (PA) to CDP-diacylglycerol (CDP-DAG), an essential intermediate in the synthesis of phosphatidylglycerol, cardiolipin and phosphatidylinositol. Exhibits almost no acyl chain preference for PA, showing no discrimination for the sn-1/sn-2 acyl chain composition of PAs. Plays an important role in regulating the growth of lipid droplets which are storage organelles at the center of lipid and energy homeostasis. Positively regulates the differentiation and development of adipocytes. This chain is Phosphatidate cytidylyltransferase 1, found in Mus musculus (Mouse).